Here is a 1380-residue protein sequence, read N- to C-terminus: DNA-directed RNA polymerase subunit beta (1380 aa).

The protein belongs to the RNA polymerase beta chain family. The RNAP catalytic core consists of 2 alpha, 1 beta, 1 beta' and 1 omega subunit. When a sigma factor is associated with the core the holoenzyme is formed, which can initiate transcription.

The catalysed reaction is RNA(n) + a ribonucleoside 5'-triphosphate = RNA(n+1) + diphosphate. In terms of biological role, DNA-dependent RNA polymerase catalyzes the transcription of DNA into RNA using the four ribonucleoside triphosphates as substrates. The protein is DNA-directed RNA polymerase subunit beta of Alcanivorax borkumensis (strain ATCC 700651 / DSM 11573 / NCIMB 13689 / SK2).